The sequence spans 422 residues: Metallocarboxypeptidase A-like protein TRV_02598 (422 aa).

The signal sequence occupies residues 1–16; the sequence is MQSLLLLATLLGSALG. Positions 17-119 are cleaved as a propeptide — activation peptide; that stretch reads GAIPSQSANY…ELLTLDGGAN (103 aa). One can recognise a Peptidase M14 domain in the interval 125–421; sequence SYHKYEDHLK…AGVKAMFSKL (297 aa). The Zn(2+) site is built by H185 and E188. Substrate is bound by residues 185–188, R240, and 256–257; these read HARE and NR. An intrachain disulfide couples C250 to C273. H311 contributes to the Zn(2+) binding site. Residue 312 to 313 coordinates substrate; sequence SY. E387 serves as the catalytic Proton donor/acceptor.

The protein belongs to the peptidase M14 family. The cofactor is Zn(2+).

The protein localises to the secreted. Its function is as follows. Extracellular metalloprotease that contributes to pathogenicity. The sequence is that of Metallocarboxypeptidase A-like protein TRV_02598 from Trichophyton verrucosum (strain HKI 0517).